A 166-amino-acid polypeptide reads, in one-letter code: Prorelaxin H1 (166 aa).

The N-terminal stretch at 1–5 is a signal peptide; sequence SRAVA. 3 disulfide bridges follow: cysteine 16-cysteine 153, cysteine 28-cysteine 166, and cysteine 152-cysteine 157. A propeptide spans 37 to 139 (connecting peptide); it reads SLSQEDAPQT…KYLGLDTHSQ (103 aa).

This sequence belongs to the insulin family. As to quaternary structure, heterodimer of a B chain and an A chain linked by two disulfide bonds. As to expression, expressed in the corpus luteum of pregnancy but not in the placenta.

It is found in the secreted. Its function is as follows. Relaxin is an ovarian hormone that acts with estrogen to produce dilatation of the birth canal in many mammals. May be involved in remodeling of connective tissues during pregnancy, promoting growth of pubic ligaments and ripening of the cervix. The sequence is that of Prorelaxin H1 (RNL1) from Pan troglodytes (Chimpanzee).